The chain runs to 207 residues: 8-oxoguanine DNA glycosylase/AP lyase (207 aa).

Active-site residues include Lys-128 and Asp-146.

It belongs to the type-2 OGG1 family.

The catalysed reaction is 2'-deoxyribonucleotide-(2'-deoxyribose 5'-phosphate)-2'-deoxyribonucleotide-DNA = a 3'-end 2'-deoxyribonucleotide-(2,3-dehydro-2,3-deoxyribose 5'-phosphate)-DNA + a 5'-end 5'-phospho-2'-deoxyribonucleoside-DNA + H(+). Its function is as follows. Catalyzes the excision of an oxidatively damaged form of guanine (7,8-dihydro-8-oxoguanine = 8-oxoG) from DNA. Also cleaves the DNA backbone at apurinic/apyrimidinic sites (AP sites). The sequence is that of 8-oxoguanine DNA glycosylase/AP lyase from Saccharolobus solfataricus (strain ATCC 35092 / DSM 1617 / JCM 11322 / P2) (Sulfolobus solfataricus).